We begin with the raw amino-acid sequence, 533 residues long: Flavin-dependent halogenase armH4 (533 aa).

FAD contacts are provided by Gly16, Ala19, and Glu49. Chloride contacts are provided by Ser337 and Gly338. Val339 provides a ligand contact to FAD.

The protein belongs to the flavin-dependent halogenase family.

It carries out the reaction melleolide F + FADH2 + chloride + O2 = 6'-chloromelleolide F + FAD + 2 H2O + H(+). The catalysed reaction is melleolide F + bromide + FADH2 + O2 = 6'-bromomelleolide F + FAD + 2 H2O. Functionally, flavin-dependent halogenase involved in the biosynthesis of melleolides, a range of antifungal and phytotoxic polyketide derivatives composed of an orsellinic acid (OA) moiety esterified to various sesquiterpene alcohols. The halogenase catalyzes the transfer of a single chlorine atom to the melleolide backbone, resulting in a 6'-chloromelleolide product. The enzyme acts on free substrate and does not depend on carrier-protein-dependent acceptor molecules. Can also catalyze the transfer of a single bromine atom to the melleolide backbone in vitro. In Armillaria mellea (Honey mushroom), this protein is Flavin-dependent halogenase armH4.